A 156-amino-acid polypeptide reads, in one-letter code: Small ribosomal subunit protein uS7 (156 aa).

It belongs to the universal ribosomal protein uS7 family. In terms of assembly, part of the 30S ribosomal subunit. Contacts proteins S9 and S11.

In terms of biological role, one of the primary rRNA binding proteins, it binds directly to 16S rRNA where it nucleates assembly of the head domain of the 30S subunit. Is located at the subunit interface close to the decoding center, probably blocks exit of the E-site tRNA. This is Small ribosomal subunit protein uS7 from Prochlorococcus marinus (strain MIT 9301).